The sequence spans 160 residues: Cytochrome b6-f complex subunit 4 (160 aa).

3 consecutive transmembrane segments (helical) span residues 36–56 (LLYI…GLAV), 95–115 (LLGV…PFLE), and 131–151 (TVFL…TLPI).

It belongs to the cytochrome b family. PetD subfamily. The 4 large subunits of the cytochrome b6-f complex are cytochrome b6, subunit IV (17 kDa polypeptide, petD), cytochrome f and the Rieske protein, while the 4 small subunits are petG, petL, petM and petN. The complex functions as a dimer.

The protein localises to the plastid. Its subcellular location is the chloroplast thylakoid membrane. Component of the cytochrome b6-f complex, which mediates electron transfer between photosystem II (PSII) and photosystem I (PSI), cyclic electron flow around PSI, and state transitions. The chain is Cytochrome b6-f complex subunit 4 from Saccharum hybrid (Sugarcane).